The primary structure comprises 643 residues: Very long-chain fatty acid transport protein (643 aa).

Residues 1-15 (MACMHQAQLYNDLEE) lie on the Cytoplasmic side of the membrane. The helical transmembrane segment at 16–36 (LLTGPSVPIVAGAAGAAALTA) threads the bilayer. The Extracellular portion of the chain corresponds to 37–138 (YINAKYHIAH…AIDGGNSAEH (102 aa)). A helical transmembrane segment spans residues 139–159 (LMLWLALDAIGAATSFLNWNL). The Cytoplasmic portion of the chain corresponds to 160–249 (TGAGLIHCIK…TGLPKGVFIS (90 aa)). Residue 235-246 (YTSGTTGLPKGV) participates in ATP binding. The stretch at 250–318 (TGRELRTDWS…FWPEVVASEA (69 aa)) is an intramembrane region. Over 319-643 (NIIQYVGELG…QGIVDKRIRL (325 aa)) the chain is Cytoplasmic. The FACS motif lies at 477 to 525 (DLWFKSGDMLRQDAEGRVYFVDRLGDTFRWKSENVSTNEVADVMGTFPQ).

Belongs to the ATP-dependent AMP-binding enzyme family.

The protein localises to the lipid droplet. Its subcellular location is the cell membrane. It localises to the peroxisome membrane. The protein resides in the peroxisome. It catalyses the reaction a very long-chain fatty acid + ATP + CoA = a very long-chain fatty acyl-CoA + AMP + diphosphate. In terms of biological role, acyl-CoA synthetase required for both the import of long chain fatty acids (LCFAs) (C14-C18) and the activation very long chain fatty acids (VLCFAs) (C20-C26) by esterification of the fatty acids into metabolically active CoA-thioesters for subsequent degradation or incorporation into phospholipids. The transport and fatty acyl-CoA synthetase activities are genetically separable and are thus independent activities. Esterifies VLCFAs in the peroxisome matrix. The VLCFAs are actively transported into peroxisomes by a PXA1-PXA2 heterodimeric transporter in the peroxisomal membrane. The sequence is that of Very long-chain fatty acid transport protein (FAT1) from Cochliobolus heterostrophus (Southern corn leaf blight fungus).